The sequence spans 551 residues: Trehalose-6-phosphate hydrolase (551 aa).

Asp-200 acts as the Nucleophile in catalysis. Glu-251 serves as the catalytic Proton donor.

This sequence belongs to the glycosyl hydrolase 13 family.

The protein resides in the cytoplasm. The catalysed reaction is alpha,alpha-trehalose 6-phosphate + H2O = D-glucose 6-phosphate + D-glucose. Its function is as follows. Hydrolyzes trehalose-6-phosphate to glucose and glucose 6-phosphate. Can also very effectively hydrolyze p-nitrophenyl-alpha-D-glucopyranoside, but it does not recognize trehalose, sucrose, maltose, isomaltose, or maltodextrins. The protein is Trehalose-6-phosphate hydrolase (treC) of Escherichia coli (strain K12).